Here is an 885-residue protein sequence, read N- to C-terminus: 3-hydroxy-3-methylglutaryl-coenzyme A reductase (885 aa).

Topologically, residues 1–9 are cytoplasmic; that stretch reads MLSRLFRMH. The chain crosses the membrane as a helical span at residues 10-39; the sequence is GLFVASHPWEVIVGTVTLTICMMSMNMFTG. Topologically, residues 40–56 are lumenal; sequence NDKICGWNYECPKFEED. The helical transmembrane segment at 57 to 78 threads the bilayer; the sequence is VLSSDIIILTITRCIAILYIYF. An SSD domain is found at 61 to 218; sequence DIIILTITRC…MTFFPACVSL (158 aa). An INSIG-binding motif motif is present at residues 75–78; it reads YIYF. Topologically, residues 79-89 are cytoplasmic; that stretch reads QFQNLRQLGSK. Residue Lys-89 forms a Glycyl lysine isopeptide (Lys-Gly) (interchain with G-Cter in ubiquitin) linkage. Residues 90 to 114 form a helical membrane-spanning segment; the sequence is YILGIAGLFTIFSSFVFSTVVIHFL. Over 115-123 the chain is Lumenal; that stretch reads DKELTGLNE. A helical transmembrane segment spans residues 124–149; sequence ALPFFLLLIDLSRASALAKFALSSNS. Residues 150 to 159 are Cytoplasmic-facing; it reads QDEVRENIAR. A helical membrane pass occupies residues 160-187; it reads GMAILGPTFTLDALVECLVIGVGTMSGV. The Lumenal portion of the chain corresponds to 188-191; the sequence is RQLE. A helical membrane pass occupies residues 192–220; it reads IMCCFGCMSVLATYFVFMTFFPACVSLVL. Topologically, residues 221 to 248 are cytoplasmic; that stretch reads ELSRESREGRPIWQLSHFARVLEGEENK. A Glycyl lysine isopeptide (Lys-Gly) (interchain with G-Cter in ubiquitin) cross-link involves residue Lys-248. Residues 249 to 275 traverse the membrane as a helical segment; the sequence is PNPVTQRVKIIMSLGLVLVHAHSRWIA. At 276–314 the chain is on the lumenal side; the sequence is DPSPQNSTADNSKVSLGLDENVSKRIEPSVSLWQFYLSK. 2 N-linked (GlcNAc...) asparagine glycosylation sites follow: Asn-281 and Asn-296. The helical transmembrane segment at 315–339 threads the bilayer; the sequence is MISMDIEQVITLTLALLLAVKYIFF. Residues 340–885 are Cytoplasmic-facing; the sequence is EQAETESTLS…LQGTCTKKAA (546 aa). Active-site charge relay system residues include Glu-558, Lys-688, and Asp-764. The active-site Proton donor is the His-863. Residue Ser-869 is modified to Phosphoserine; by AMPK.

The protein belongs to the HMG-CoA reductase family. As to quaternary structure, homotetramer. Homodimer. Interacts (via its SSD) with INSIG1; the interaction, accelerated by sterols, leads to the recruitment of HMGCR to AMFR/gp78 for its ubiquitination by the sterol-mediated ERAD pathway. Interacts with UBIAD1. Post-translationally, undergoes sterol-mediated ubiquitination and ER-associated degradation (ERAD). Accumulation of sterols in the endoplasmic reticulum (ER) membrane, triggers binding of the reductase to the ER membrane protein INSIG1 or INSIG2. The INSIG1 binding leads to the recruitment of the ubiquitin ligase, AMFR/gp78, RNF139 or RNF145, initiating ubiquitination of the reductase. The ubiquitinated reductase is then extracted from the ER membrane and delivered to cytosolic 26S proteosomes by a mechanism probably mediated by the ATPase Valosin-containing protein VCP/p97. The INSIG2-binding leads to the recruitment of the ubiquitin ligase RNF139, initiating ubiquitination of the reductase. Lys-248 is the main site of ubiquitination. Ubiquitination is enhanced by the presence of a geranylgeranylated protein. N-glycosylated. Deglycosylated by NGLY1 on release from the endoplasmic reticulum (ER) in a sterol-mediated manner. In terms of processing, phosphorylated. Phosphorylation at Ser-869 reduces the catalytic activity. In terms of tissue distribution, high expression found in liver, heart, kidney, bladder and subcutaneous fat. Lower levels in lung, uterus and large intestine. Lowest levels in cerebrum, spleen, spinal cord, stomach, ovary, longissimus muscle, and small intestine.

The protein resides in the endoplasmic reticulum membrane. Its subcellular location is the peroxisome membrane. It catalyses the reaction (R)-mevalonate + 2 NADP(+) + CoA = (3S)-3-hydroxy-3-methylglutaryl-CoA + 2 NADPH + 2 H(+). Its pathway is metabolic intermediate biosynthesis; (R)-mevalonate biosynthesis; (R)-mevalonate from acetyl-CoA: step 3/3. With respect to regulation, regulated by a negative feedback mechanism through sterols and non-sterol metabolites derived from mevalonate. Phosphorylation at Ser-869 down-regulates the catalytic activity. Catalyzes the conversion of (3S)-hydroxy-3-methylglutaryl-CoA (HMG-CoA) to mevalonic acid, the rate-limiting step in the synthesis of cholesterol and other isoprenoids, thus plays a critical role in cellular cholesterol homeostasis. This Sus scrofa (Pig) protein is 3-hydroxy-3-methylglutaryl-coenzyme A reductase (HMGCR).